The following is an 89-amino-acid chain: Co-chaperonin GroES (89 aa).

Belongs to the GroES chaperonin family. Heptamer of 7 subunits arranged in a ring. Interacts with the chaperonin GroEL.

It localises to the cytoplasm. Functionally, together with the chaperonin GroEL, plays an essential role in assisting protein folding. The GroEL-GroES system forms a nano-cage that allows encapsulation of the non-native substrate proteins and provides a physical environment optimized to promote and accelerate protein folding. GroES binds to the apical surface of the GroEL ring, thereby capping the opening of the GroEL channel. This chain is Co-chaperonin GroES, found in Pseudothermotoga lettingae (strain ATCC BAA-301 / DSM 14385 / NBRC 107922 / TMO) (Thermotoga lettingae).